Consider the following 124-residue polypeptide: Probable S-adenosyl-L-methionine-binding protein VNG_1115H (124 aa).

In terms of domain architecture, TsaA-like spans 3–124; that stretch reads ATPIGYADTR…PVLDLKPALD (122 aa). S-adenosyl-L-methionine-binding positions include 20–22, 58–59, arginine 78, and 111–114; these read PRQ, DD, and AHGS.

It belongs to the tRNA methyltransferase O family.

In Halobacterium salinarum (strain ATCC 700922 / JCM 11081 / NRC-1) (Halobacterium halobium), this protein is Probable S-adenosyl-L-methionine-binding protein VNG_1115H.